We begin with the raw amino-acid sequence, 102 residues long: Small ribosomal subunit protein bS6 (102 aa).

Belongs to the bacterial ribosomal protein bS6 family.

Its function is as follows. Binds together with bS18 to 16S ribosomal RNA. This Desulfovibrio desulfuricans (strain ATCC 27774 / DSM 6949 / MB) protein is Small ribosomal subunit protein bS6.